The sequence spans 264 residues: uncharacterized protein (264 aa).

The helical transmembrane segment at 7-27 threads the bilayer; sequence LTLGICLVLLIILIVGYVIMT.

Belongs to the staphylococcal tandem lipoprotein family.

It localises to the cell membrane. This is an uncharacterized protein from Staphylococcus aureus (strain MW2).